The following is a 499-amino-acid chain: Aspartyl/glutamyl-tRNA(Asn/Gln) amidotransferase subunit B (499 aa).

Belongs to the GatB/GatE family. GatB subfamily. In terms of assembly, heterotrimer of A, B and C subunits.

It catalyses the reaction L-glutamyl-tRNA(Gln) + L-glutamine + ATP + H2O = L-glutaminyl-tRNA(Gln) + L-glutamate + ADP + phosphate + H(+). It carries out the reaction L-aspartyl-tRNA(Asn) + L-glutamine + ATP + H2O = L-asparaginyl-tRNA(Asn) + L-glutamate + ADP + phosphate + 2 H(+). Its function is as follows. Allows the formation of correctly charged Asn-tRNA(Asn) or Gln-tRNA(Gln) through the transamidation of misacylated Asp-tRNA(Asn) or Glu-tRNA(Gln) in organisms which lack either or both of asparaginyl-tRNA or glutaminyl-tRNA synthetases. The reaction takes place in the presence of glutamine and ATP through an activated phospho-Asp-tRNA(Asn) or phospho-Glu-tRNA(Gln). The chain is Aspartyl/glutamyl-tRNA(Asn/Gln) amidotransferase subunit B from Bifidobacterium animalis subsp. lactis (strain AD011).